Consider the following 392-residue polypeptide: Fasciculation and elongation protein zeta-1 (392 aa).

Residues 1–36 (MEAPLVSLDEEFEDIRPSCTEEPEEKPQCLYGTSPH) are disordered. Ser-58 is subject to Phosphoserine. The tract at residues 175–196 (MQNSPDPEEEEEVLEEEDGGEI) is disordered. Positions 180 to 194 (DPEEEEEVLEEEDGG) are enriched in acidic residues. A coiled-coil region spans residues 230–298 (SELTELLDRV…KKRRKEKGLS (69 aa)). Phosphoserine is present on residues Ser-298 and Ser-316.

It belongs to the zygin family. As to quaternary structure, homodimer. Interacts with the NH2-terminal variable region (V1) of PKC zeta and weakly with that of PKC epsilon. Interacts with UBE4B and SAP30L. Interacts with SCOC and ULK1; SCOC interferes with ULK1-binding to FEZ1. Directly interacts with SCOC and UVRAG. Stabilizes the interaction between SCOC and UVRAG during amino acid starvation. Post-translationally, phosphorylated by protein kinase C zeta; which enhances interaction with UBE4B and polyubiquitination. In terms of processing, polyubiquitinated in a UBE4B-dependent manner; which does not lead to proteasomal degradation and may be important for neurogenic activity. Polyubiquitin linkage seems to be mainly through Lys-26.

It localises to the cytoplasm. It is found in the cytoskeleton. Its subcellular location is the microtubule organizing center. The protein resides in the centrosome. The protein localises to the cell membrane. In terms of biological role, may be involved in axonal outgrowth as component of the network of molecules that regulate cellular morphology and axon guidance machinery. May participate in the transport of mitochondria and other cargos along microtubules. The sequence is that of Fasciculation and elongation protein zeta-1 (Fez1) from Mus musculus (Mouse).